A 133-amino-acid chain; its full sequence is MARVTVEDCVDKVENRFELVLLAGHRARQISQGVPITVDRDNDKNPVVALREIADETLSPDDLKEDLIHSLQKHVEVDEPEAAPAQIANAAEEIAEGIAEAGEEDVVTFDRMSEEELLAGIEGLVAPEKNDGF.

The protein belongs to the RNA polymerase subunit omega family. As to quaternary structure, the RNAP catalytic core consists of 2 alpha, 1 beta, 1 beta' and 1 omega subunit. When a sigma factor is associated with the core the holoenzyme is formed, which can initiate transcription.

The enzyme catalyses RNA(n) + a ribonucleoside 5'-triphosphate = RNA(n+1) + diphosphate. In terms of biological role, promotes RNA polymerase assembly. Latches the N- and C-terminal regions of the beta' subunit thereby facilitating its interaction with the beta and alpha subunits. This chain is DNA-directed RNA polymerase subunit omega, found in Brucella canis (strain ATCC 23365 / NCTC 10854 / RM-666).